A 1440-amino-acid polypeptide reads, in one-letter code: ABC transporter G family member 46 (1440 aa).

A disordered region spans residues 1-42 (MDDDVDAGEIYAVDRQREEGSASAAAFSRSPSTGRVDDDDDD). Positions 21-32 (SASAAAFSRSPS) are enriched in low complexity. The region spanning 137-419 (ANTLHMTTRS…FKSLGFKCLE (283 aa)) is the ABC transporter 1 domain. 170–177 (GSPGSGKT) lines the ATP pocket. The 214-residue stretch at 497–710 (KILKANIDRE…ALNALAVNEF (214 aa)) folds into the ABC transmembrane type-2 1 domain. 7 consecutive transmembrane segments (helical) span residues 516–536 (LYIF…SVFI), 561–581 (AIMF…PVFF), 603–623 (TPIS…VIGF), 634–654 (FLVL…IAAL), 659–679 (VVAS…SGFI), 688–708 (WLIW…LAVN), and 745–765 (IGLG…TICL). Residues 794 to 829 (DQEPSSGGRVTNDKRYTEGGNNDEATSSNANHNSSP) are disordered. The span at 812–829 (GGNNDEATSSNANHNSSP) shows a compositional bias: polar residues. In terms of domain architecture, ABC transporter 2 spans 843 to 1095 (MTFEDIRYSI…ELIKYFESIE (253 aa)). ATP is bound at residue 888 to 895 (GISGAGKT). Residues 1168–1382 (IQCLACLWKQ…TINGLVTSQF (215 aa)) form the ABC transmembrane type-2 2 domain. The next 7 membrane-spanning stretches (helical) occupy residues 1188–1208 (IAVN…MFWG), 1219–1236 (LLSA…LGVQ), 1271–1291 (VVVE…IVYS), 1302–1322 (FFWY…YGMM), 1332–1352 (MSSI…GFLI), 1357–1377 (IPIW…INGL), and 1410–1430 (LWVA…LFGF).

Belongs to the ABC transporter superfamily. ABCG family. PDR (TC 3.A.1.205) subfamily.

It is found in the membrane. Functionally, may be a general defense protein. The chain is ABC transporter G family member 46 from Oryza sativa subsp. japonica (Rice).